The chain runs to 215 residues: NADH-quinone oxidoreductase subunit C (215 aa).

Belongs to the complex I 30 kDa subunit family. As to quaternary structure, NDH-1 is composed of 14 different subunits. Subunits NuoB, C, D, E, F, and G constitute the peripheral sector of the complex.

It localises to the cell inner membrane. It catalyses the reaction a quinone + NADH + 5 H(+)(in) = a quinol + NAD(+) + 4 H(+)(out). In terms of biological role, NDH-1 shuttles electrons from NADH, via FMN and iron-sulfur (Fe-S) centers, to quinones in the respiratory chain. The immediate electron acceptor for the enzyme in this species is believed to be ubiquinone. Couples the redox reaction to proton translocation (for every two electrons transferred, four hydrogen ions are translocated across the cytoplasmic membrane), and thus conserves the redox energy in a proton gradient. In Francisella philomiragia subsp. philomiragia (strain ATCC 25017 / CCUG 19701 / FSC 153 / O#319-036), this protein is NADH-quinone oxidoreductase subunit C.